Consider the following 131-residue polypeptide: Peptide methionine sulfoxide reductase MsrB (131 aa).

The 123-residue stretch at 8–130 (LEEWRAMLDP…NSVCLDLKPR (123 aa)) folds into the MsrB domain. Zn(2+)-binding residues include cysteine 47, cysteine 50, cysteine 96, and cysteine 99. Cysteine 119 serves as the catalytic Nucleophile.

This sequence belongs to the MsrB Met sulfoxide reductase family. Requires Zn(2+) as cofactor.

The catalysed reaction is L-methionyl-[protein] + [thioredoxin]-disulfide + H2O = L-methionyl-(R)-S-oxide-[protein] + [thioredoxin]-dithiol. The chain is Peptide methionine sulfoxide reductase MsrB from Pseudomonas entomophila (strain L48).